A 244-amino-acid polypeptide reads, in one-letter code: Multiple organellar RNA editing factor 3, mitochondrial (244 aa).

The transit peptide at Met1 to Lys62 directs the protein to the mitochondrion. 2 disordered regions span residues Thr59–Pro82 and Tyr196–Ala244. Residues Arg60–Asn80 are compositionally biased toward polar residues. A compositionally biased stretch (basic and acidic residues) spans Pro210–Pro226.

Belongs to the MORF family. In terms of assembly, heterodimer with MORF1. Homodimer and heterodimers with MORF8/RIP1, MORF4/RIP4 and MORF5/RIP5.

It is found in the mitochondrion. Functionally, involved in organellar RNA editing. Required for the processing of RNA editing sites in mitochondria. This is Multiple organellar RNA editing factor 3, mitochondrial from Arabidopsis thaliana (Mouse-ear cress).